Here is a 391-residue protein sequence, read N- to C-terminus: 4-hydroxy-3-methylbut-2-en-1-yl diphosphate synthase (flavodoxin) (391 aa).

[4Fe-4S] cluster contacts are provided by C282, C285, C317, and E324.

Belongs to the IspG family. The cofactor is [4Fe-4S] cluster.

The enzyme catalyses (2E)-4-hydroxy-3-methylbut-2-enyl diphosphate + oxidized [flavodoxin] + H2O + 2 H(+) = 2-C-methyl-D-erythritol 2,4-cyclic diphosphate + reduced [flavodoxin]. It functions in the pathway isoprenoid biosynthesis; isopentenyl diphosphate biosynthesis via DXP pathway; isopentenyl diphosphate from 1-deoxy-D-xylulose 5-phosphate: step 5/6. In terms of biological role, converts 2C-methyl-D-erythritol 2,4-cyclodiphosphate (ME-2,4cPP) into 1-hydroxy-2-methyl-2-(E)-butenyl 4-diphosphate. The chain is 4-hydroxy-3-methylbut-2-en-1-yl diphosphate synthase (flavodoxin) from Acidothermus cellulolyticus (strain ATCC 43068 / DSM 8971 / 11B).